We begin with the raw amino-acid sequence, 530 residues long: MHQRILILDYGSQVTQLIARRVREAGVYSEIHAGDVDDAFVRDQVAQGLKGIILSGSHASAYEEGSMRVPAAVFEVGVPVLGICYGMQSMAQQLGGTVSFSDHREFGYAEVRAHGHTKLLDGLADFTTDEGHGMLKVWMSHGDKVTELPPGFKLMASTASCPIAGMADEDRGFYAVQFHPEVTHTVQGKAMLARFVKDICGCEGDWNMPDYISEAVARIREQVGSDEVILGLSGGVDSSVAAALIHRAIGDQLTCVFVDHGLLRLDEGKQVMQTFAENMGVKIVHVDATSQFMGKLTGVADPEAKRKIIGREFVEVFQDEAGKLQGAKWLAQGTIYPDVIESAGAKTGKATSIKSHHNVGGLPDTLNLQLLEPLRELFKDEVRELGVALGLPPQMVYRHPFPGPGLGVRILGEVKHEYAELLRRADAIFIEELRNAKDPASGLTWYELTSQAFAVFLPVKSVGVMGDGRTYEYVVALRAVQTFDFMTADWAPLPHPLLARVSSRIINEVRGINRVVYDVSSKPPATIEWE.

The Glutamine amidotransferase type-1 domain occupies 4–205 (RILILDYGSQ…VKDICGCEGD (202 aa)). The active-site Nucleophile is the Cys84. Residues His179 and Glu181 contribute to the active site. One can recognise a GMPS ATP-PPase domain in the interval 206 to 398 (WNMPDYISEA…LGLPPQMVYR (193 aa)). Residue 233–239 (SGGVDSS) coordinates ATP.

Homodimer.

The enzyme catalyses XMP + L-glutamine + ATP + H2O = GMP + L-glutamate + AMP + diphosphate + 2 H(+). It participates in purine metabolism; GMP biosynthesis; GMP from XMP (L-Gln route): step 1/1. Catalyzes the synthesis of GMP from XMP. This is GMP synthase [glutamine-hydrolyzing] from Bordetella bronchiseptica (strain ATCC BAA-588 / NCTC 13252 / RB50) (Alcaligenes bronchisepticus).